Reading from the N-terminus, the 241-residue chain is Small ribosomal subunit protein uS2 (241 aa).

This sequence belongs to the universal ribosomal protein uS2 family.

The sequence is that of Small ribosomal subunit protein uS2 from Enterobacter sp. (strain 638).